Consider the following 238-residue polypeptide: 2-C-methyl-D-erythritol 4-phosphate cytidylyltransferase (238 aa).

This sequence belongs to the IspD/TarI cytidylyltransferase family. IspD subfamily.

The catalysed reaction is 2-C-methyl-D-erythritol 4-phosphate + CTP + H(+) = 4-CDP-2-C-methyl-D-erythritol + diphosphate. It participates in isoprenoid biosynthesis; isopentenyl diphosphate biosynthesis via DXP pathway; isopentenyl diphosphate from 1-deoxy-D-xylulose 5-phosphate: step 2/6. Functionally, catalyzes the formation of 4-diphosphocytidyl-2-C-methyl-D-erythritol from CTP and 2-C-methyl-D-erythritol 4-phosphate (MEP). The chain is 2-C-methyl-D-erythritol 4-phosphate cytidylyltransferase from Leptospira interrogans serogroup Icterohaemorrhagiae serovar copenhageni (strain Fiocruz L1-130).